A 466-amino-acid chain; its full sequence is 3-isopropylmalate dehydratase large subunit (466 aa).

3 residues coordinate [4Fe-4S] cluster: C347, C407, and C410.

Belongs to the aconitase/IPM isomerase family. LeuC type 1 subfamily. Heterodimer of LeuC and LeuD. Requires [4Fe-4S] cluster as cofactor.

It catalyses the reaction (2R,3S)-3-isopropylmalate = (2S)-2-isopropylmalate. It participates in amino-acid biosynthesis; L-leucine biosynthesis; L-leucine from 3-methyl-2-oxobutanoate: step 2/4. Functionally, catalyzes the isomerization between 2-isopropylmalate and 3-isopropylmalate, via the formation of 2-isopropylmaleate. This chain is 3-isopropylmalate dehydratase large subunit, found in Shigella dysenteriae serotype 1 (strain Sd197).